The primary structure comprises 316 residues: Ribosomal RNA small subunit methyltransferase A (316 aa).

N33, V35, G60, E81, D110, and N133 together coordinate S-adenosyl-L-methionine.

The protein belongs to the class I-like SAM-binding methyltransferase superfamily. rRNA adenine N(6)-methyltransferase family. RsmA subfamily.

It localises to the cytoplasm. The catalysed reaction is adenosine(1518)/adenosine(1519) in 16S rRNA + 4 S-adenosyl-L-methionine = N(6)-dimethyladenosine(1518)/N(6)-dimethyladenosine(1519) in 16S rRNA + 4 S-adenosyl-L-homocysteine + 4 H(+). Specifically dimethylates two adjacent adenosines (A1518 and A1519) in the loop of a conserved hairpin near the 3'-end of 16S rRNA in the 30S particle. May play a critical role in biogenesis of 30S subunits. In Corynebacterium jeikeium (strain K411), this protein is Ribosomal RNA small subunit methyltransferase A.